A 388-amino-acid polypeptide reads, in one-letter code: Leucine aminopeptidase 1 (388 aa).

An N-terminal signal peptide occupies residues 1-19; the sequence is MKSLSLLALAAIAPPAAVA. A propeptide spanning residues 20 to 88 is cleaved from the precursor; it reads AVVDRQVPFE…SAKSHERIQV (69 aa). N-linked (GlcNAc...) asparagine glycosylation occurs at N180. H188, D207, E246, and D273 together coordinate Zn(2+). A disulfide bond links C322 and C326. H355 contributes to the Zn(2+) binding site.

Belongs to the peptidase M28 family. M28E subfamily. In terms of assembly, monomer. Zn(2+) is required as a cofactor.

The protein localises to the secreted. In terms of biological role, extracellular aminopeptidase that allows assimilation of proteinaceous substrates. This chain is Leucine aminopeptidase 1 (LAP1), found in Coccidioides posadasii (strain C735) (Valley fever fungus).